The sequence spans 437 residues: MNNNKIKIIGGGLAGCEAAWQAAERGVAVKLHEMKPERYSPAHHLPGLAELVCSNSLRGESLDNAVGLLKEELKRSGSLFIAAALATRVPAGGALAVDRQLFSDYITEKITNHPLIEVVYGEVAQIPEEGIVIVASGPLTSDRLAASIATHTGNYLYFYDAIAPIVTADSIDFGKAFRASRYGKGDGDDYLNCPMDETTYKAFVAALLGGDKVAAKDFEKVVHFEGCMPIEEMAERGPETLRFGPMKPVGLPDPRTGVEPYAVVQLRQENRDGTLFNLVGFQTKLTYSEQKRIFSLIPGLEHADFVRLGSMHRNTFINAPQLLLPTFQLKNTPRILFAGQITGVEGYVESAGSGFMAGINVARLAKGGALTVPPPTTALGALVHHITSVDTKHFQPMNVNYGLFPELGGKVKKKDKRARLAERALTDLTEWQGMVQD.

10 to 15 (GGGLAG) lines the FAD pocket.

It belongs to the MnmG family. TrmFO subfamily. FAD is required as a cofactor.

It localises to the cytoplasm. The enzyme catalyses uridine(54) in tRNA + (6R)-5,10-methylene-5,6,7,8-tetrahydrofolate + NADH + H(+) = 5-methyluridine(54) in tRNA + (6S)-5,6,7,8-tetrahydrofolate + NAD(+). It carries out the reaction uridine(54) in tRNA + (6R)-5,10-methylene-5,6,7,8-tetrahydrofolate + NADPH + H(+) = 5-methyluridine(54) in tRNA + (6S)-5,6,7,8-tetrahydrofolate + NADP(+). In terms of biological role, catalyzes the folate-dependent formation of 5-methyl-uridine at position 54 (M-5-U54) in all tRNAs. The sequence is that of Methylenetetrahydrofolate--tRNA-(uracil-5-)-methyltransferase TrmFO from Geotalea daltonii (strain DSM 22248 / JCM 15807 / FRC-32) (Geobacter daltonii).